A 291-amino-acid polypeptide reads, in one-letter code: Glycine--tRNA ligase alpha subunit (291 aa).

It belongs to the class-II aminoacyl-tRNA synthetase family. Tetramer of two alpha and two beta subunits.

The protein localises to the cytoplasm. It carries out the reaction tRNA(Gly) + glycine + ATP = glycyl-tRNA(Gly) + AMP + diphosphate. This Microcystis aeruginosa (strain NIES-843 / IAM M-2473) protein is Glycine--tRNA ligase alpha subunit.